A 592-amino-acid chain; its full sequence is Aspartate--tRNA ligase (592 aa).

Glutamate 173 contacts L-aspartate. An aspartate region spans residues glutamine 197–lysine 200. L-aspartate is bound at residue arginine 219. ATP is bound by residues arginine 219 to glutamate 221 and glutamine 228. Position 448 (histidine 448) interacts with L-aspartate. An ATP-binding site is contributed by glutamate 482. Arginine 489 lines the L-aspartate pocket. Glycine 534 to arginine 537 lines the ATP pocket.

The protein belongs to the class-II aminoacyl-tRNA synthetase family. Type 1 subfamily. As to quaternary structure, homodimer.

The protein localises to the cytoplasm. The catalysed reaction is tRNA(Asp) + L-aspartate + ATP = L-aspartyl-tRNA(Asp) + AMP + diphosphate. Catalyzes the attachment of L-aspartate to tRNA(Asp) in a two-step reaction: L-aspartate is first activated by ATP to form Asp-AMP and then transferred to the acceptor end of tRNA(Asp). The polypeptide is Aspartate--tRNA ligase (Shewanella baltica (strain OS195)).